Reading from the N-terminus, the 736-residue chain is Prolyl oligopeptidase dbiP (736 aa).

Catalysis depends on charge relay system residues Ser572, Asp656, and His692.

Belongs to the peptidase S9A family. As to quaternary structure, monomer.

It catalyses the reaction Hydrolysis of Pro-|-Xaa &gt;&gt; Ala-|-Xaa in oligopeptides.. The protein operates within mycotoxin biosynthesis. Its function is as follows. Prolyl oligopeptidase; part of the gene cluster that mediates the biosynthesis of dendrothelin A, a highly methylated cyclic dodecapeptide showing slight nematodicidal activity. Excises and catalyzes the macrocyclization of the methylated core peptide of dbiMA to yield dendrothelin A. DbiP works in a two-step fashion with an initial cleavage at the N-terminus, followed by a second cleavage at the C-terminus of the core peptide. According to this mechanism, the free N-terminus of the core peptide, generated by the first cleavage, attacks the covalent intermediate of the second cleavage, which results in macrocyclization of the core peptide. This chain is Prolyl oligopeptidase dbiP, found in Dendrothele bispora (strain CBS 962.96).